Here is a 359-residue protein sequence, read N- to C-terminus: MRPAPALALAALCLLVLPAAAAAAAYFGLTGREVLTPFPGLGTAAAPAQAGAHLKQCDLLKLSRRQKQLCRREPGLAETLRDAAHLGLLECQFQFRQERWNCSLEGRTGLLQRGFKETAFLYAVSAAALTHALARACSAGRMERCTCDDSPGLESRQAWQWGVCGDNLKYSTKFLSNFLGPKRGSKDLRARADAHNTHVGIKAVKSGLRTTCKCHGVSGSCAVRTCWKQLSPFRETGQVLKLRYDTAVKVSSATNEALGRLELWAPAKPGGPAKGLAPRPGDLVYMEDSPSFCRPSKYSPGTAGRVCSRDSSCSSLCCGRGYDTQSRMVVFSCHCQVQWCCYVECQQCAQQELVYTCKR.

The first 23 residues, 1-23, serve as a signal peptide directing secretion; the sequence is MRPAPALALAALCLLVLPAAAAA. Disulfide bonds link C91–C102, C137–C145, C147–C164, C212–C226, C214–C221, C293–C318, C307–C313, C317–C357, C333–C348, C335–C345, and C340–C341. N101 is a glycosylation site (N-linked (GlcNAc...) asparagine). The O-palmitoleoyl serine; by PORCN moiety is linked to residue S218.

The protein belongs to the Wnt family. Forms a soluble 1:1 complex with AFM; this prevents oligomerization and is required for prolonged biological activity. The complex with AFM may represent the physiological form in body fluids. Component of the Wnt-Fzd-LRP5-LRP6 signaling complex that contains a WNT protein, a FZD protein and LRP5 or LRP6. Interacts directly in the complex with LRP6. Interacts with PKD1 (via extracellular domain). Palmitoleoylation is required for efficient binding to frizzled receptors. Depalmitoleoylation leads to Wnt signaling pathway inhibition.

The protein localises to the secreted. Its subcellular location is the extracellular space. The protein resides in the extracellular matrix. Functionally, ligand for members of the frizzled family of seven transmembrane receptors. Functions in the canonical Wnt/beta-catenin signaling pathway. Required for normal embryonic kidney development, and for normal development of the urogenital tract, including uterus and part of the oviduct and the upper vagina in females, and epididymis and vas deferens in males. Activates a signaling cascade in the metanephric mesenchyme that induces tubulogenesis. Acts upstream of WNT4 in the signaling pathways that mediate development of kidney tubules and the Muellerian ducts. Plays a role in cranofacial development and is required for normal fusion of the palate during embryonic development. The chain is Protein Wnt-9b (Wnt9b) from Mus musculus (Mouse).